The following is a 242-amino-acid chain: Probable transcriptional regulatory protein Bxeno_A1185 (242 aa).

It belongs to the TACO1 family.

It is found in the cytoplasm. This chain is Probable transcriptional regulatory protein Bxeno_A1185, found in Paraburkholderia xenovorans (strain LB400).